A 624-amino-acid chain; its full sequence is Chromosomal replication initiator protein DnaA (624 aa).

A domain I, interacts with DnaA modulators region spans residues 1–99; the sequence is MADVPADLAA…SAGEPPSPPA (99 aa). The interval 88 to 284 is disordered; it reads DDSAGEPPSP…APGPGEPHAR (197 aa). The domain II stretch occupies residues 100-283; sequence PPMHQSHQSQ…PAPGPGEPHA (184 aa). Residues 102 to 112 show a composition bias toward low complexity; that stretch reads MHQSHQSQQGH. Composition is skewed to basic and acidic residues over residues 118-141 and 176-206; these read QRDD…DGMP and GYQD…REQA. Over residues 250-264 the composition is skewed to gly residues; sequence PRQGGHGPGRTGGSV. A domain III, AAA+ region region spans residues 284–500; it reads RLNPKYLFDT…GALIRVTAFA (217 aa). ATP contacts are provided by Gly-328, Gly-330, Lys-331, and Thr-332. The segment at 501–624 is domain IV, binds dsDNA; it reads SLNRQPVDLG…TELTNRIKNG (124 aa).

It belongs to the DnaA family. As to quaternary structure, oligomerizes as a right-handed, spiral filament on DNA at oriC.

It is found in the cytoplasm. Plays an essential role in the initiation and regulation of chromosomal replication. ATP-DnaA binds to the origin of replication (oriC) to initiate formation of the DNA replication initiation complex once per cell cycle. Binds the DnaA box (a 9 base pair repeat at the origin) and separates the double-stranded (ds)DNA. Forms a right-handed helical filament on oriC DNA; dsDNA binds to the exterior of the filament while single-stranded (ss)DNA is stabiized in the filament's interior. The ATP-DnaA-oriC complex binds and stabilizes one strand of the AT-rich DNA unwinding element (DUE), permitting loading of DNA polymerase. After initiation quickly degrades to an ADP-DnaA complex that is not apt for DNA replication. Binds acidic phospholipids. In terms of biological role, the DnaA box consensus is 5'-(T/C)(T/C)(G/AC)TCCACA-3'. The sequence is that of Chromosomal replication initiator protein DnaA from Streptomyces anulatus (Streptomyces chrysomallus).